The chain runs to 180 residues: Probable chorismate pyruvate-lyase (180 aa).

Positions 82, 120, and 165 each coordinate substrate.

It belongs to the UbiC family.

It is found in the cytoplasm. The enzyme catalyses chorismate = 4-hydroxybenzoate + pyruvate. It participates in cofactor biosynthesis; ubiquinone biosynthesis. In terms of biological role, removes the pyruvyl group from chorismate, with concomitant aromatization of the ring, to provide 4-hydroxybenzoate (4HB) for the ubiquinone pathway. This is Probable chorismate pyruvate-lyase from Aliivibrio fischeri (strain ATCC 700601 / ES114) (Vibrio fischeri).